The primary structure comprises 432 residues: Killer cell immunoglobulin-like receptor 3DL1 (432 aa).

The signal sequence occupies residues 1 to 21; sequence MLLWFLSLVCSGFFLVQRMSA. The Extracellular portion of the chain corresponds to 22–335; the sequence is HVGSHDKPFL…ADTKTNNYKN (314 aa). 3 Ig-like C2-type domains span residues 42 to 100, 135 to 202, and 238 to 301; these read GQNV…HPQY, GGNV…NSYY, and GETM…FRNA. N-linked (GlcNAc...) asparagine glycosylation is present at asparagine 44. Cysteines 49 and 95 form a disulfide. An N-linked (GlcNAc...) asparagine glycan is attached at asparagine 137. 2 disulfide bridges follow: cysteine 142–cysteine 195 and cysteine 245–cysteine 294. Asparagine 300 is a glycosylation site (N-linked (GlcNAc...) asparagine). A helical transmembrane segment spans residues 336-356; the sequence is LHILTGLLVTMVLVVIIIFYS. Over 357-432 the chain is Cytoplasmic; that stretch reads CYFSKQNKSQ…DTIVYMEIMK (76 aa).

This sequence belongs to the immunoglobulin superfamily.

The protein localises to the cell membrane. In terms of biological role, receptor on natural killer (NK) cells. Inhibits the activity of NK cells thus preventing cell lysis. In Mus musculus (Mouse), this protein is Killer cell immunoglobulin-like receptor 3DL1 (Kir3dl1).